A 589-amino-acid polypeptide reads, in one-letter code: Probable ATP-dependent RNA helicase DDX59 (589 aa).

Disordered regions lie at residues 1–36 (MFVP…QLEG) and 48–98 (KEAV…SKTQ). Basic and acidic residues predominate over residues 12 to 27 (NSNDDLKSCEAKKSKP). A Glycyl lysine isopeptide (Lys-Gly) (interchain with G-Cter in SUMO2) cross-link involves residue lysine 26. Position 64 is a phosphoserine (serine 64). The span at 80–91 (GVKDSHPSEEPV) shows a compositional bias: basic and acidic residues. The segment at 104–133 (GEPVCVVCGRYGEYICDKTDEDVCSLECKA) adopts an HIT-type zinc-finger fold. Serine 156 and serine 160 each carry phosphoserine. A Q motif motif is present at residues 203-231 (IDFEHCGFPETLNQNLKKSGYEVPTPIQM). One can recognise a Helicase ATP-binding domain in the interval 234-375 (IPVGLLGRDI…DQLLHNPVRI (142 aa)). 247 to 254 (ADTGSGKT) is a binding site for ATP. Positions 323-326 (VKAD) match the DEAD box motif. The Helicase C-terminal domain maps to 399-549 (KKKKLFEILN…ILPPQLLNSP (151 aa)).

It belongs to the DEAD box helicase family. DDX59 subfamily. As to quaternary structure, interacts (via HIT-type zinc finger) with the RUVBL1/RUVBL2 complex in the presence of ADP.

It localises to the cytoplasm. The protein localises to the nucleus. It carries out the reaction ATP + H2O = ADP + phosphate + H(+). This Rattus norvegicus (Rat) protein is Probable ATP-dependent RNA helicase DDX59 (Ddx59).